A 641-amino-acid polypeptide reads, in one-letter code: 1,3-beta-glucanosyltransferase PGA5 (641 aa).

The N-terminal stretch at 1 to 23 (MTTLSTIWLFLITITAIFQLGLS) is a signal peptide. Asparagine 25 carries an N-linked (GlcNAc...) asparagine glycan. Residues cysteine 106 and cysteine 135 are joined by a disulfide bond. Positions 124, 192, 193, 234, and 239 each coordinate (1,3-beta-D-glucosyl)n. Glutamate 193 serves as the catalytic Proton donor. 6 cysteine pairs are disulfide-bonded: cysteine 248–cysteine 390, cysteine 276–cysteine 307, cysteine 424–cysteine 474, cysteine 426–cysteine 528, cysteine 433–cysteine 498, and cysteine 451–cysteine 456. Catalysis depends on glutamate 304, which acts as the Nucleophile. Tyrosine 336 lines the (1,3-beta-D-glucosyl)n pocket. A disordered region spans residues 535–613 (KEEEKEVQEE…SPKTSKSIAG (79 aa)). Residues 571–581 (KSKEKEKGKLI) show a composition bias toward basic and acidic residues. Residues 582–593 (EEEEEEEEEEEE) show a composition bias toward acidic residues. A compositionally biased stretch (polar residues) spans 596–610 (KTPSSGEKSPKTSKS). The N-linked (GlcNAc...) asparagine glycan is linked to asparagine 621. A lipid anchor (GPI-anchor amidated aspartate) is attached at aspartate 622. A propeptide spans 623–641 (SIWKTFIEILFTCSAAILI) (removed in mature form).

This sequence belongs to the glycosyl hydrolase 72 family.

The protein localises to the cell membrane. Its function is as follows. Splits internally a 1,3-beta-glucan molecule and transfers the newly generated reducing end (the donor) to the non-reducing end of another 1,3-beta-glucan molecule (the acceptor) forming a 1,3-beta linkage, resulting in the elongation of 1,3-beta-glucan chains in the cell wall. Involved in spore wall assembly. The protein is 1,3-beta-glucanosyltransferase PGA5 (PGA5) of Candida albicans (strain SC5314 / ATCC MYA-2876) (Yeast).